Consider the following 353-residue polypeptide: MNGTEGPYFYVPMVNTSGIVRSPYEYPQYYLVNPAAYAALGAYMFLLILVGFPINFLTLYVTIEHKKLRTPLNYILLNLAVADLFMVFGGFTTTMYTSMHGYFVLGRLGCNIEGFFATLGGEIALWSLVVLAIERWVVVCKPISNFRFGENHAIMGLAFTWLMALACAAPPLVGWSRYIPEGMQCSCGIDYYTRAEGFNNESFVIYMFICHFSIPLLVVFFCYGRLLCAVKEAAAAQQESETTQRAEREVTRMVIMMVIAFLVCWLPYASVAWWIFTHQGSDFGPVFMTIPAFFAKSSSIYNPMIYICLNKQFRHCMITTLCCGKNPFEEEEGASTASKTEASSVSSSSVSPA.

Residues 1-36 (MNGTEGPYFYVPMVNTSGIVRSPYEYPQYYLVNPAA) lie on the Extracellular side of the membrane. N-linked (GlcNAc...) asparagine glycosylation is found at N2 and N15. A helical transmembrane segment spans residues 37 to 61 (YAALGAYMFLLILVGFPINFLTLYV). Residues 62–73 (TIEHKKLRTPLN) lie on the Cytoplasmic side of the membrane. Residues 74 to 96 (YILLNLAVADLFMVFGGFTTTMY) form a helical membrane-spanning segment. The Extracellular portion of the chain corresponds to 97–110 (TSMHGYFVLGRLGC). C110 and C187 are oxidised to a cystine. The chain crosses the membrane as a helical span at residues 111 to 133 (NIEGFFATLGGEIALWSLVVLAI). Positions 134–136 (ERW) match the 'Ionic lock' involved in activated form stabilization motif. The Cytoplasmic portion of the chain corresponds to 134 to 152 (ERWVVVCKPISNFRFGENH). The helical transmembrane segment at 153 to 173 (AIMGLAFTWLMALACAAPPLV) threads the bilayer. The Extracellular portion of the chain corresponds to 174-202 (GWSRYIPEGMQCSCGIDYYTRAEGFNNES). N-linked (GlcNAc...) asparagine glycosylation occurs at N200. Residues 203–224 (FVIYMFICHFSIPLLVVFFCYG) traverse the membrane as a helical segment. At 225–252 (RLLCAVKEAAAAQQESETTQRAEREVTR) the chain is on the cytoplasmic side. The helical transmembrane segment at 253–274 (MVIMMVIAFLVCWLPYASVAWW) threads the bilayer. Topologically, residues 275–286 (IFTHQGSDFGPV) are extracellular. A helical membrane pass occupies residues 287–308 (FMTIPAFFAKSSSIYNPMIYIC). The residue at position 296 (K296) is an N6-(retinylidene)lysine. Over 309–353 (LNKQFRHCMITTLCCGKNPFEEEEGASTASKTEASSVSSSSVSPA) the chain is Cytoplasmic. Residues C322 and C323 are each lipidated (S-palmitoyl cysteine). Residues 331-353 (EEGASTASKTEASSVSSSSVSPA) are disordered. Over residues 334 to 353 (ASTASKTEASSVSSSSVSPA) the composition is skewed to low complexity.

Belongs to the G-protein coupled receptor 1 family. Opsin subfamily. Post-translationally, phosphorylated on some or all of the serine and threonine residues present in the C-terminal region. In terms of processing, contains one covalently linked retinal chromophore.

It is found in the membrane. The protein resides in the cell projection. Its subcellular location is the cilium. The protein localises to the photoreceptor outer segment. Photoreceptor required for image-forming vision at low light intensity. While most salt water fish species use retinal as chromophore, most freshwater fish use 3-dehydroretinal, or a mixture of retinal and 3-dehydroretinal. Light-induced isomerization of 11-cis to all-trans retinal triggers a conformational change that activates signaling via G-proteins. Subsequent receptor phosphorylation mediates displacement of the bound G-protein alpha subunit by arrestin and terminates signaling. This chain is Rhodopsin (rho), found in Diplodus vulgaris (Common two-banded seabream).